The sequence spans 759 residues: ARF GTPase-activating protein GIT2 (759 aa).

An Arf-GAP domain is found at 1–124 (MSKRLRSSEV…AFVHRLPCRD (124 aa)). A C4-type zinc finger spans residues 11-34 (CADCSGPDPSWASVNRGTFLCDEC). 3 ANK repeats span residues 132-161 (DLSK…QANF), 166-195 (KGNT…DPGT), and 199-228 (SGKT…ELTD). The tract at residues 379 to 422 (QHSVESQDNDQPDYDSVASDEDTDLETTASKTNRQKSLDSDLSD) is disordered. Over residues 385-403 (QDNDQPDYDSVASDEDTDL) the composition is skewed to acidic residues. Serine 394 and serine 397 each carry phosphoserine. Threonine 401 is modified (phosphothreonine). Residues serine 415, serine 418, and serine 421 each carry the phosphoserine modification. Residues 437–478 (LVASEAKIQQLMKVNNNLSDELRIMQKKLQTLQSENSNLRKQ) adopt a coiled-coil conformation. Residues 480-499 (TTNVYQVQTGSEYTDTSNHS) are compositionally biased toward polar residues. Disordered stretches follow at residues 480-538 (TTNV…EESR) and 554-643 (VTSS…TEDV). Tyrosine 484 is modified (phosphotyrosine). Residues 555–569 (TSSSSLPSFPSTLSW) show a composition bias toward low complexity. Phosphoserine occurs at positions 559, 562, and 570. Residues 570-583 (SRDESARRASRLEK) show a composition bias toward basic and acidic residues. The segment covering 584 to 597 (QNSTPESDYDNTPN) has biased composition (polar residues). Threonine 587 bears the Phosphothreonine mark. Position 614 is a phosphoserine (serine 614).

In terms of assembly, may form heterooligomers with GIT1. Directly interacts with protein Piccolo/PCLO. Interacts with PPFIA1 and PPFIA2. Interacts with ARHGEF7. Identified in a complex with ARHGEF6 and BIN2. Interacts with PAK3. Interacts with PXN/paxillin. Interacts with TGFB1I1. Forms a complex with EFNB1 and GRB4/NCK2.

GTPase-activating protein for ADP ribosylation factor family members, including ARF1. The protein is ARF GTPase-activating protein GIT2 (GIT2) of Homo sapiens (Human).